Here is a 433-residue protein sequence, read N- to C-terminus: sn-glycerol-3-phosphate-binding periplasmic protein UgpB (433 aa).

An N-terminal signal peptide occupies residues Met-1–Ala-25. The sn-glycerol 3-phosphate site is built by Tyr-67, Asp-91, Ser-146, Ser-273, Gly-307, Tyr-346, and Arg-397.

Belongs to the bacterial solute-binding protein 1 family. As to quaternary structure, the complex is composed of two ATP-binding proteins (UgpC), two transmembrane proteins (UgpA and UgpE) and a solute-binding protein (UgpB).

It localises to the periplasm. Functionally, part of the ABC transporter complex UgpBAEC involved in sn-glycerol-3-phosphate (G3P) import. Binds G3P. The sequence is that of sn-glycerol-3-phosphate-binding periplasmic protein UgpB (ugpB) from Brucella abortus (strain 2308).